The following is a 243-amino-acid chain: uncharacterized protein (243 aa).

It localises to the nucleus. The protein resides in the nucleolus. This is an uncharacterized protein from Schizosaccharomyces pombe (strain 972 / ATCC 24843) (Fission yeast).